Here is a 240-residue protein sequence, read N- to C-terminus: UDP-2,3-diacylglucosamine hydrolase (240 aa).

The Mn(2+) site is built by aspartate 9, histidine 11, aspartate 43, asparagine 81, and histidine 116. A substrate-binding site is contributed by 81–82 (NR). Residues aspartate 124, serine 162, lysine 166, lysine 169, and histidine 197 each coordinate substrate. Mn(2+) contacts are provided by histidine 197 and histidine 199.

This sequence belongs to the LpxH family. It depends on Mn(2+) as a cofactor.

The protein localises to the cell inner membrane. The catalysed reaction is UDP-2-N,3-O-bis[(3R)-3-hydroxytetradecanoyl]-alpha-D-glucosamine + H2O = 2-N,3-O-bis[(3R)-3-hydroxytetradecanoyl]-alpha-D-glucosaminyl 1-phosphate + UMP + 2 H(+). Its pathway is glycolipid biosynthesis; lipid IV(A) biosynthesis; lipid IV(A) from (3R)-3-hydroxytetradecanoyl-[acyl-carrier-protein] and UDP-N-acetyl-alpha-D-glucosamine: step 4/6. Hydrolyzes the pyrophosphate bond of UDP-2,3-diacylglucosamine to yield 2,3-diacylglucosamine 1-phosphate (lipid X) and UMP by catalyzing the attack of water at the alpha-P atom. Involved in the biosynthesis of lipid A, a phosphorylated glycolipid that anchors the lipopolysaccharide to the outer membrane of the cell. This Neisseria meningitidis serogroup C / serotype 2a (strain ATCC 700532 / DSM 15464 / FAM18) protein is UDP-2,3-diacylglucosamine hydrolase.